Consider the following 153-residue polypeptide: Large ribosomal subunit protein eL15 (153 aa).

A Glycyl lysine isopeptide (Lys-Gly) (interchain with G-Cter in SUMO2) cross-link involves residue Lys32. Ser46 and Ser49 each carry phosphoserine. The tract at residues 114-135 (TSAGRKSRGLGKGHKFHHTIGG) is disordered. The span at 118–131 (RKSRGLGKGHKFHH) shows a compositional bias: basic residues.

This sequence belongs to the eukaryotic ribosomal protein eL15 family. In terms of assembly, component of the large ribosomal subunit. Interacts with IFIT1 (via TPR repeats 1-4).

The protein localises to the cytoplasm. In terms of biological role, component of the large ribosomal subunit. The ribosome is a large ribonucleoprotein complex responsible for the synthesis of proteins in the cell. The protein is Large ribosomal subunit protein eL15 (RPL15) of Sus scrofa (Pig).